The sequence spans 110 residues: Thiosulfate sulfurtransferase GlpE (110 aa).

The Rhodanese domain occupies 19 to 107; it reads EDSLAVLVDI…WRRQALPIIQ (89 aa). Cysteine 67 acts as the Cysteine persulfide intermediate in catalysis.

It belongs to the GlpE family.

It localises to the cytoplasm. The catalysed reaction is thiosulfate + hydrogen cyanide = thiocyanate + sulfite + 2 H(+). The enzyme catalyses thiosulfate + [thioredoxin]-dithiol = [thioredoxin]-disulfide + hydrogen sulfide + sulfite + 2 H(+). Transferase that catalyzes the transfer of sulfur from thiosulfate to thiophilic acceptors such as cyanide or dithiols. May function in a CysM-independent thiosulfate assimilation pathway by catalyzing the conversion of thiosulfate to sulfite, which can then be used for L-cysteine biosynthesis. This Photobacterium profundum (strain SS9) protein is Thiosulfate sulfurtransferase GlpE.